The sequence spans 509 residues: Activin receptor type-1 (509 aa).

The first 20 residues, 1–20, serve as a signal peptide directing secretion; it reads MVDGAMILSVLMMMALPSPS. The Extracellular segment spans residues 21 to 123; the sequence is MEDEEPKVNP…FPGSQNFHLE (103 aa). Asn-102 carries an N-linked (GlcNAc...) asparagine glycan. A helical membrane pass occupies residues 124–146; it reads VGLIILSVVFAVCLFACILGVAL. The Cytoplasmic segment spans residues 147–509; it reads RKFKRRNQER…NSLDKLKTDC (363 aa). The region spanning 178-207 is the GS domain; it reads STLAELLDHSCTSGSGSGLPFLVQRTVARQ. The Protein kinase domain occupies 208-502; that stretch reads ITLLECVGKG…KTLTKIDNSL (295 aa). Residues 214 to 222 and Lys-235 contribute to the ATP site; that span reads VGKGRYGEV. The Proton acceptor role is filled by Asp-336. Ser-501 bears the Phosphoserine mark.

Belongs to the protein kinase superfamily. TKL Ser/Thr protein kinase family. TGFB receptor subfamily. In terms of assembly, interacts with FKBP1A. Interacts with FCHO1. Interacts with CLU. Interacts with type II receptors AMHR2 and ACVR2A. Interacts with BMP7. Interacts with GDF2/BMP9. Interacts with BMP6 (when glycosylated); the interaction may induce HAMP expression. Interacts with TSC22D1/TSC-22. Mg(2+) serves as cofactor. Requires Mn(2+) as cofactor. In terms of tissue distribution, urogenital ridge, testis, ovary, brain and lungs.

The protein localises to the membrane. The enzyme catalyses L-threonyl-[receptor-protein] + ATP = O-phospho-L-threonyl-[receptor-protein] + ADP + H(+). It catalyses the reaction L-seryl-[receptor-protein] + ATP = O-phospho-L-seryl-[receptor-protein] + ADP + H(+). In terms of biological role, bone morphogenetic protein (BMP) type I receptor that is involved in a wide variety of biological processes, including bone, heart, cartilage, nervous, and reproductive system development and regulation. As a type I receptor, forms heterotetrameric receptor complexes with the type II receptors AMHR2, ACVR2A ors ACVR2B. Upon binding of ligands such as BMP7 or GDF2/BMP9 to the heteromeric complexes, type II receptors transphosphorylate ACVR1 intracellular domain. In turn, ACVR1 kinase domain is activated and subsequently phosphorylates SMAD1/5/8 proteins that transduce the signal. In addition to its role in mediating BMP pathway-specific signaling, suppresses TGFbeta/activin pathway signaling by interfering with the binding of activin to its type II receptor. Besides canonical SMAD signaling, can activate non-canonical pathways such as p38 mitogen-activated protein kinases/MAPKs. May promote the expression of HAMP, potentially via its interaction with BMP6. The polypeptide is Activin receptor type-1 (Acvr1) (Rattus norvegicus (Rat)).